The following is a 319-amino-acid chain: Acetyl esterase (319 aa).

Positions 91–93 (HGG) match the Involved in the stabilization of the negatively charged intermediate by the formation of the oxyanion hole motif. Catalysis depends on residues Ser-165, Asp-262, and His-292.

This sequence belongs to the 'GDXG' lipolytic enzyme family. In terms of assembly, homodimer. Interacts with MalT and MelA.

The protein resides in the cytoplasm. Functionally, displays esterase activity towards short chain fatty esters (acyl chain length of up to 8 carbons). Able to hydrolyze triacetylglycerol (triacetin) and tributyrylglycerol (tributyrin), but not trioleylglycerol (triolein) or cholesterol oleate. Negatively regulates MalT activity by antagonizing maltotriose binding. Inhibits MelA galactosidase activity. The polypeptide is Acetyl esterase (Escherichia coli O9:H4 (strain HS)).